We begin with the raw amino-acid sequence, 171 residues long: NRR repressor homolog 2 (171 aa).

A compositionally biased stretch (basic and acidic residues) spans 1–12; it reads MEARLSTGEKTK. Disordered regions lie at residues 1–45, 65–94, and 119–143; these read MEAR…QQQM, AALP…APWR, and TTKG…EEDK. The segment covering 26-43 has biased composition (acidic residues); it reads PEEETAAETTTSEEEEQQ.

It belongs to the NPR1-interactor family. As to quaternary structure, interacts with NPR1/NH1. Interacts with NPR3/NH3.

It localises to the nucleus. Functionally, binds to and weakly represses NPR1/NH1-mediated transcriptional activation of LG2 in vitro. This is NRR repressor homolog 2 from Oryza sativa subsp. japonica (Rice).